The chain runs to 186 residues: Glycerol-3-phosphate acyltransferase 1 (186 aa).

5 consecutive transmembrane segments (helical) span residues 9–29 (MQFL…AYIV), 58–78 (GYFV…VSIA), 85–105 (STFV…PVLF), 121–141 (IAFD…FYLI), and 161–181 (ILYS…VLIL).

The protein belongs to the PlsY family. As to quaternary structure, probably interacts with PlsX.

It is found in the cell membrane. The enzyme catalyses an acyl phosphate + sn-glycerol 3-phosphate = a 1-acyl-sn-glycero-3-phosphate + phosphate. Its pathway is lipid metabolism; phospholipid metabolism. Catalyzes the transfer of an acyl group from acyl-phosphate (acyl-PO(4)) to glycerol-3-phosphate (G3P) to form lysophosphatidic acid (LPA). This enzyme utilizes acyl-phosphate as fatty acyl donor, but not acyl-CoA or acyl-ACP. This chain is Glycerol-3-phosphate acyltransferase 1, found in Bacillus cereus (strain ZK / E33L).